The sequence spans 638 residues: MVINPSTIVSTLSMSIMAILAVSIFFFSKSYFYPPQNNNLVSFRVSNDTLSNNPNGSSLDYNSGPFAISVLKTLAFLSVISLLISVQNSFKSINLTFSLWFNNTPTNVSINFLLDQYFLLFLSVGLIVTWSIMEFSYYYMKEDPNGKAFFRPFGHFSLNMLILTSSNSLFLVFLGWEGVGFLSFLLISWWATRNDASSSALEAVIYNRIGDIGLITFMSLAVLTTNSWNLTEIITNEPNNHFVLFMLFGLILAAAGKSAQFGLHPWLPAAMEGPTPVSALLHSSTMVVAGVFLLVRTSELFSNYPNANTIVLVLGGTTALFAASTAIAQHDIKKIIAYSTTSQLGLMVAAIGIGQPVLAFFHICTHAFFKAMLFLCLGSVIHSLNNERNLRKMEGISDLSPVTSACLAMGSLALMGTPFLAGFYSKDLILEAASASFANTLGISLGIVATMLTTVYSFRIVFFCFSSNNSISPLSPIGEENSNLINALLRLSIGTILSGWFFSNFIFSPPSFTVTPEEKGLPLLVTVVGLTVIFISLSYLSSNPIKSTSHSTTTSQWFFVDIVHSALTTTSFISSSFSSSRTLDRGWQENIGAQGIAQSSTALSKANQASQIGLIKRYIASSIAAITIIATLTFIVLS.

15 consecutive transmembrane segments (helical) span residues 7–27, 66–86, 112–132, 169–189, 203–223, 242–262, 275–295, 307–327, 335–354, 365–385, 404–424, 445–465, 487–507, 520–540, and 618–638; these read TIVS…IFFF, FAIS…LISV, FLLD…TWSI, LFLV…LISW, AVIY…LAVL, FVLF…AQFG, TPVS…FLLV, ANTI…STAI, IIAY…IGIG, THAF…HSLN, SACL…AGFY, LGIV…FFCF, ALLR…NFIF, GLPL…LSYL, and YIAS…IVLS.

Belongs to the complex I subunit 5 family.

It localises to the mitochondrion inner membrane. The catalysed reaction is a ubiquinone + NADH + 5 H(+)(in) = a ubiquinol + NAD(+) + 4 H(+)(out). Core subunit of the mitochondrial membrane respiratory chain NADH dehydrogenase (Complex I) that is believed to belong to the minimal assembly required for catalysis. Complex I functions in the transfer of electrons from NADH to the respiratory chain. The immediate electron acceptor for the enzyme is believed to be ubiquinone. The protein is NADH-ubiquinone oxidoreductase chain 5 (ND5) of Paracentrotus lividus (Common sea urchin).